The following is a 315-amino-acid chain: Methionyl-tRNA formyltransferase (315 aa).

Position 114-117 (114-117) interacts with (6S)-5,6,7,8-tetrahydrofolate; that stretch reads SLLP.

This sequence belongs to the Fmt family.

The catalysed reaction is L-methionyl-tRNA(fMet) + (6R)-10-formyltetrahydrofolate = N-formyl-L-methionyl-tRNA(fMet) + (6S)-5,6,7,8-tetrahydrofolate + H(+). Functionally, attaches a formyl group to the free amino group of methionyl-tRNA(fMet). The formyl group appears to play a dual role in the initiator identity of N-formylmethionyl-tRNA by promoting its recognition by IF2 and preventing the misappropriation of this tRNA by the elongation apparatus. The polypeptide is Methionyl-tRNA formyltransferase (Corynebacterium glutamicum (strain R)).